The sequence spans 218 residues: Small ribosomal subunit protein mS34 (218 aa).

The interval 178–218 (RQKNGDPSTEEPMLSLERIRTDPWDYPENQEAKKKTKGTAV) is disordered.

Belongs to the mitochondrion-specific ribosomal protein mS34 family. In terms of assembly, component of the mitochondrial ribosome small subunit (28S) which comprises a 12S rRNA and about 30 distinct proteins.

It is found in the mitochondrion. In terms of biological role, required for mitochondrial translation, plays a role in maintaining the stability of the small ribosomal subunit and the 12S rRNA that are required for mitoribosome formation. This Bos taurus (Bovine) protein is Small ribosomal subunit protein mS34.